The following is a 62-amino-acid chain: Photosystem II reaction center protein Z (62 aa).

2 helical membrane-spanning segments follow: residues 8 to 28 (AVFALIATSSILLISVPVVFA) and 41 to 61 (FSGTSLWLGLVFLVGILNSLI).

This sequence belongs to the PsbZ family. As to quaternary structure, PSII is composed of 1 copy each of membrane proteins PsbA, PsbB, PsbC, PsbD, PsbE, PsbF, PsbH, PsbI, PsbJ, PsbK, PsbL, PsbM, PsbT, PsbY, PsbZ, Psb30/Ycf12, at least 3 peripheral proteins of the oxygen-evolving complex and a large number of cofactors. It forms dimeric complexes.

It localises to the plastid. The protein localises to the chloroplast thylakoid membrane. Its function is as follows. May control the interaction of photosystem II (PSII) cores with the light-harvesting antenna, regulates electron flow through the 2 photosystem reaction centers. PSII is a light-driven water plastoquinone oxidoreductase, using light energy to abstract electrons from H(2)O, generating a proton gradient subsequently used for ATP formation. The polypeptide is Photosystem II reaction center protein Z (Spinacia oleracea (Spinach)).